The primary structure comprises 1100 residues: Exportin-T (1100 aa).

This sequence belongs to the exportin family. Interacts with GSP1, GSP2, NSP1, NUP2 and UTP8.

It localises to the nucleus. Its subcellular location is the cytoplasm. In terms of biological role, tRNA nucleus export receptor which facilitates tRNA translocation across the nuclear pore complex. Preferentially interacts with tRNAs with mature 5'- and 3'-termini and does not distinguish between intron-containing and spliced tRNAs. In the nucleus binds to tRNA and to the Ran-GTPases GSP1 or GSP2 in their active GTP-bound form. Docking of this trimeric complex to the nuclear pore complex (NPC) is mediated through binding to nucleoporins. Upon transit of a nuclear export complex into the cytoplasm, disassembling of the complex and hydrolysis of Ran-GTP to Ran-GDP cause release of the tRNA from the export receptor. The directionality of nuclear export is thought to be conferred by an asymmetric distribution of the GTP- and GDP-bound forms of Ran between the cytoplasm and nucleus. Involved in pre-tRNA splicing, probably by affecting the interaction of pre-tRNA with splicing endonuclease. This is Exportin-T (LOS1) from Saccharomyces cerevisiae (strain YJM789) (Baker's yeast).